The primary structure comprises 205 residues: Thiamine-phosphate synthase (205 aa).

Residues 34 to 38 (QLRCK) and asparagine 66 contribute to the 4-amino-2-methyl-5-(diphosphooxymethyl)pyrimidine site. Positions 67 and 86 each coordinate Mg(2+). 4-amino-2-methyl-5-(diphosphooxymethyl)pyrimidine is bound at residue serine 105. 131–133 (TTT) lines the 2-[(2R,5Z)-2-carboxy-4-methylthiazol-5(2H)-ylidene]ethyl phosphate pocket. Position 134 (lysine 134) interacts with 4-amino-2-methyl-5-(diphosphooxymethyl)pyrimidine. Glycine 163 contacts 2-[(2R,5Z)-2-carboxy-4-methylthiazol-5(2H)-ylidene]ethyl phosphate.

It belongs to the thiamine-phosphate synthase family. Mg(2+) is required as a cofactor.

The enzyme catalyses 2-[(2R,5Z)-2-carboxy-4-methylthiazol-5(2H)-ylidene]ethyl phosphate + 4-amino-2-methyl-5-(diphosphooxymethyl)pyrimidine + 2 H(+) = thiamine phosphate + CO2 + diphosphate. The catalysed reaction is 2-(2-carboxy-4-methylthiazol-5-yl)ethyl phosphate + 4-amino-2-methyl-5-(diphosphooxymethyl)pyrimidine + 2 H(+) = thiamine phosphate + CO2 + diphosphate. It carries out the reaction 4-methyl-5-(2-phosphooxyethyl)-thiazole + 4-amino-2-methyl-5-(diphosphooxymethyl)pyrimidine + H(+) = thiamine phosphate + diphosphate. It functions in the pathway cofactor biosynthesis; thiamine diphosphate biosynthesis; thiamine phosphate from 4-amino-2-methyl-5-diphosphomethylpyrimidine and 4-methyl-5-(2-phosphoethyl)-thiazole: step 1/1. Its function is as follows. Condenses 4-methyl-5-(beta-hydroxyethyl)thiazole monophosphate (THZ-P) and 2-methyl-4-amino-5-hydroxymethyl pyrimidine pyrophosphate (HMP-PP) to form thiamine monophosphate (TMP). This is Thiamine-phosphate synthase from Neisseria meningitidis serogroup B (strain ATCC BAA-335 / MC58).